The sequence spans 144 residues: Deoxyuridine 5'-triphosphate nucleotidohydrolase (144 aa).

Positions 66, 79, 82, 85, 90, 134, 139, and 140 each coordinate dUMP.

The protein belongs to the dUTPase family. As to quaternary structure, homotrimer. It depends on Mg(2+) as a cofactor.

The catalysed reaction is dUTP + H2O = dUMP + diphosphate + H(+). Its pathway is pyrimidine metabolism; dUMP biosynthesis; dUMP from dCTP (dUTP route): step 2/2. Involved in nucleotide metabolism via production of dUMP, the immediate precursor of thymidine nucleotides, and decreases the intracellular concentration of dUTP so that uracil cannot be incorporated into DNA. This Candida glabrata (strain ATCC 2001 / BCRC 20586 / JCM 3761 / NBRC 0622 / NRRL Y-65 / CBS 138) (Yeast) protein is Deoxyuridine 5'-triphosphate nucleotidohydrolase (DUT1).